We begin with the raw amino-acid sequence, 540 residues long: MFCNQCQEALNVIGCTKNGVCGKKGEVADLQDRLLYVLKSVSYYNLKARELGLNEETADKIVLDAFFATLTNTNFDKQAIESYIKKGFEIRDSIKAKLPAGTLPAEEDLPDVAKVTPENITGMDVAVHSTQNEDVRSLRELLTYGMKGMAAYAHHAYILGYKDEEIFKFIEKGLVATTDDTIGVDDLIGLVLECGQKGVSVLALLDKANTETYGSPEPTAVNIGVRGNPGILISGHDLLDLEQLLEQTKGTGIDVYTHGEMLPANSYPAFKKYDNFAGNYGNAWWRQNEEFEKFNGPVLMTTNCIIPPRESYRNRIYTTGVVGFEGLPHIHEKEDGTKDFTSLIEQAKMSKPPEQLESGTIMGGFAHEAALSVADKIIDAVKTGKISRFMVMAGCDGRHKERAYYTEFAKALPENTVILTAGCAKYRYNKLDLGDIGGIPRVLDAGQCNDCYSLVVIAQKLAEAFGLEDINDLPISYNIAWYEQKAVLVLLALLSLGVKNIVLGPTLPAFVSPNVLKVLVDNFNIRPNTTVEEDMKVLLG.

4 residues coordinate [4Fe-4S] cluster: Cys-3, Cys-6, Cys-15, and Cys-21. Hybrid [4Fe-2O-2S] cluster contacts are provided by His-236, Glu-260, Cys-304, Cys-395, Cys-423, Cys-448, Glu-483, and Lys-485. Position 395 is a cysteine persulfide (Cys-395).

It belongs to the HCP family. It depends on [4Fe-4S] cluster as a cofactor. Requires hybrid [4Fe-2O-2S] cluster as cofactor.

The protein localises to the cytoplasm. It catalyses the reaction A + NH4(+) + H2O = hydroxylamine + AH2 + H(+). Functionally, catalyzes the reduction of hydroxylamine to form NH(3) and H(2)O. This Methanosarcina mazei (strain ATCC BAA-159 / DSM 3647 / Goe1 / Go1 / JCM 11833 / OCM 88) (Methanosarcina frisia) protein is Hydroxylamine reductase.